The chain runs to 248 residues: Probable transcriptional regulatory protein PLES_43501 (248 aa).

The protein belongs to the TACO1 family.

It is found in the cytoplasm. In Pseudomonas aeruginosa (strain LESB58), this protein is Probable transcriptional regulatory protein PLES_43501.